We begin with the raw amino-acid sequence, 139 residues long: MEAVVFVFSLLDCCALIFLSVYFIITLSDLECDYINARSCCSKLNKWVIPELIGHTIVTVLLLMSLHWFIFLLNLPVATWNIYRYIMVPSGNMGVFDPTEIHNRGQLKSHMKEAMIKLGFHLLCFFMYLYSMILALIND.

3 helical membrane passes run Val5 to Ile25, Ile57 to Val77, and Leu118 to Asn138.

This sequence belongs to the cornichon family. In terms of assembly, interacts with Sec23/24 complex components SEC24B and SEC24D. Interacts with CCR5. Interacts with ADRB2 in the early secretory pathway.

The protein localises to the membrane. Its subcellular location is the endoplasmic reticulum. It localises to the endoplasmic reticulum-Golgi intermediate compartment. Functionally, involved in G protein-coupled receptors (GPCRs) trafficking from the endoplasmic reticulum to the cell surface; it promotes the exit of GPCRs from the early secretory pathway, likely through interaction with the COPII machinery. The chain is Protein cornichon homolog 4 (CNIH4) from Homo sapiens (Human).